Reading from the N-terminus, the 546-residue chain is Protein phosphatase 1G (546 aa).

Gly2 carries N-myristoyl glycine lipidation. Arg22 carries the post-translational modification Omega-N-methylarginine. Residues 26 to 505 enclose the PPM-type phosphatase domain; it reads PYGFSAMQGW…DNMTCIIICF (480 aa). Mn(2+)-binding residues include Asp60 and Gly61. Disordered regions lie at residues 116 to 139 and 161 to 328; these read QIAG…DVDN and GQNC…SDSG. Thr122 is modified (phosphothreonine). Acidic residues predominate over residues 123-139; that stretch reads EDEDEKEKVADEDDVDN. At Ser183 the chain carries Phosphoserine. The span at 259–312 shows a compositional bias: acidic residues; it reads DSEDESDEAEEEEEDSEECSEEEDGYSSEEAENEEDEDDTEEAEEDDEEEEEEM. Lys383 is modified (N6-acetyllysine). Residues Asp441 and Asp496 each coordinate Mn(2+). The segment at 512-546 is disordered; that stretch reads ELQPESGKRKLEEVLSTEGAEENGNSDKKKKAKRD. Ser527 carries the phosphoserine modification.

This sequence belongs to the PP2C family. As to quaternary structure, interacts with NOL3; may dephosphorylate NOL3. Mg(2+) is required as a cofactor. Mn(2+) serves as cofactor. Widely expressed. Most abundant in testis, skeletal muscle, and heart.

The protein resides in the cytoplasm. It localises to the membrane. The enzyme catalyses O-phospho-L-seryl-[protein] + H2O = L-seryl-[protein] + phosphate. It carries out the reaction O-phospho-L-threonyl-[protein] + H2O = L-threonyl-[protein] + phosphate. The sequence is that of Protein phosphatase 1G (PPM1G) from Homo sapiens (Human).